Reading from the N-terminus, the 60-residue chain is Large ribosomal subunit protein bL32 (60 aa).

The interval 1–60 (MAVQQNKKTPSKRGMHRSHDFLVAPQLSVEQTTGETHMRHHISPNGFYRGRKVLKTKNDE) is disordered. Over residues 49 to 60 (RGRKVLKTKNDE) the composition is skewed to basic residues.

Belongs to the bacterial ribosomal protein bL32 family.

This is Large ribosomal subunit protein bL32 from Herminiimonas arsenicoxydans.